The sequence spans 282 residues: Bis(5'-nucleosyl)-tetraphosphatase, symmetrical (282 aa).

Belongs to the Ap4A hydrolase family.

It catalyses the reaction P(1),P(4)-bis(5'-adenosyl) tetraphosphate + H2O = 2 ADP + 2 H(+). Hydrolyzes diadenosine 5',5'''-P1,P4-tetraphosphate to yield ADP. In Burkholderia mallei (strain NCTC 10247), this protein is Bis(5'-nucleosyl)-tetraphosphatase, symmetrical.